A 118-amino-acid polypeptide reads, in one-letter code: Large ribosomal subunit protein bL20 (118 aa).

Belongs to the bacterial ribosomal protein bL20 family.

Binds directly to 23S ribosomal RNA and is necessary for the in vitro assembly process of the 50S ribosomal subunit. It is not involved in the protein synthesizing functions of that subunit. This chain is Large ribosomal subunit protein bL20, found in Sulfurihydrogenibium sp. (strain YO3AOP1).